The primary structure comprises 113 residues: MLMQPLMMSDNPDDESDLGLLTKTRPRTQRPPRYKVLLLNDDYTPMEFVVIVLERFFGLNHAQAFEIMLTVHKKGLAVVGVFSHEVAETKVAQVMDYARRHQHPLQCTMEKDD.

The disordered stretch occupies residues 1–26 (MLMQPLMMSDNPDDESDLGLLTKTRP).

This sequence belongs to the ClpS family. Binds to the N-terminal domain of the chaperone ClpA.

Functionally, involved in the modulation of the specificity of the ClpAP-mediated ATP-dependent protein degradation. The polypeptide is ATP-dependent Clp protease adapter protein ClpS (Ruegeria sp. (strain TM1040) (Silicibacter sp.)).